The chain runs to 353 residues: Inactive ADP-ribosyltransferase ARH2 (353 aa).

Serine 27 is subject to Phosphoserine.

It belongs to the ADP-ribosylglycohydrolase family. In terms of tissue distribution, expressed in the embryonic heart at E11.5.

The protein localises to the cytoplasm. It localises to the myofibril. Its subcellular location is the sarcomere. Its function is as follows. Required for myofibril assembly and outgrowth of the cardiac chambers in the developing heart. Appears to be catalytically inactive, showing no activity against O-acetyl-ADP-ribose. The protein is Inactive ADP-ribosyltransferase ARH2 (Adprhl1) of Mus musculus (Mouse).